Here is a 346-residue protein sequence, read N- to C-terminus: Annexin A1 (346 aa).

A2 is modified (N-acetylalanine). S5 is subject to Phosphoserine; by TRPM7. An Isoglutamyl lysine isopeptide (Gln-Lys) (interchain with K-?) cross-link involves residue Q19. Y21 is subject to Phosphotyrosine; by EGFR. 2 positions are modified to phosphoserine: S34 and S37. The residue at position 41 (T41) is a Phosphothreonine. Annexin repeat units lie at residues F42–K113, T114–K185, D197–K269, and S273–G344. Residue K58 is modified to N6-acetyllysine. Ca(2+)-binding residues include G59, V60, E62, K97, L100, E105, M127, G129, G131, T132, and E134. Phosphothreonine is present on T136. Ca(2+)-binding residues include D171, G210, and R213. K214 participates in a covalent cross-link: Glycyl lysine isopeptide (Lys-Gly) (interchain with G-Cter in SUMO1); alternate. K214 is covalently cross-linked (Glycyl lysine isopeptide (Lys-Gly) (interchain with G-Cter in SUMO2); alternate). Residue G215 coordinates Ca(2+). At K239 the chain carries N6-acetyllysine. Residues D253, E255, and L256 each contribute to the Ca(2+) site. K257 is covalently cross-linked (Glycyl lysine isopeptide (Lys-Gly) (interchain with G-Cter in SUMO1)). 4 residues coordinate Ca(2+): E261, M286, G288, and G290. K312 carries the N6-acetyllysine modification. Cysteines 324 and 343 form a disulfide. Ca(2+) is bound by residues L328, E330, and T331. Residue K332 forms a Glycyl lysine isopeptide (Lys-Gly) (interchain with G-Cter in SUMO1) linkage. E336 is a Ca(2+) binding site.

It belongs to the annexin family. Homodimer; non-covalently linked. Homodimer; linked by transglutamylation. Homodimers linked by transglutamylation are observed in placenta, but not in other tissues. Interacts with S100A11. Heterotetramer, formed by two molecules each of S100A11 and ANXA1. Interacts with DYSF. Interacts with EGFR. In terms of processing, phosphorylated by protein kinase C, EGFR and TRPM7. Phosphorylated in response to EGF treatment. Sumoylated. Post-translationally, proteolytically cleaved by cathepsin CTSG to release the active N-terminal peptide Ac2-26. Detected on surface epithelia and mucosal glands in nasal cavity, trachea, bronchi and bronchioles. Detected in blood vessel endothelial cells. Detected in neutrophils (at protein level).

It is found in the nucleus. The protein localises to the cytoplasm. It localises to the cell projection. Its subcellular location is the cilium. The protein resides in the basolateral cell membrane. It is found in the lateral cell membrane. The protein localises to the cell membrane. It localises to the apical cell membrane. Its subcellular location is the membrane. The protein resides in the endosome membrane. It is found in the secreted. The protein localises to the extracellular space. It localises to the early endosome. Its subcellular location is the cytoplasmic vesicle membrane. The protein resides in the extracellular exosome. It is found in the cytoplasmic vesicle. The protein localises to the secretory vesicle lumen. It localises to the phagocytic cup. Its function is as follows. Plays important roles in the innate immune response as effector of glucocorticoid-mediated responses and regulator of the inflammatory process. Has anti-inflammatory activity. Plays a role in glucocorticoid-mediated down-regulation of the early phase of the inflammatory response. Contributes to the adaptive immune response by enhancing signaling cascades that are triggered by T-cell activation, regulates differentiation and proliferation of activated T-cells. Promotes the differentiation of T-cells into Th1 cells and negatively regulates differentiation into Th2 cells. Has no effect on unstimulated T-cells. Negatively regulates hormone exocytosis via activation of the formyl peptide receptors and reorganization of the actin cytoskeleton. Has high affinity for Ca(2+) and can bind up to eight Ca(2+) ions. Displays Ca(2+)-dependent binding to phospholipid membranes. Plays a role in the formation of phagocytic cups and phagosomes. Plays a role in phagocytosis by mediating the Ca(2+)-dependent interaction between phagosomes and the actin cytoskeleton. Functions at least in part by activating the formyl peptide receptors and downstream signaling cascades. Promotes chemotaxis of granulocytes and monocytes via activation of the formyl peptide receptors. Promotes rearrangement of the actin cytoskeleton, cell polarization and cell migration. Promotes resolution of inflammation and wound healing. Acts via neutrophil N-formyl peptide receptors to enhance the release of CXCL2. This Bos taurus (Bovine) protein is Annexin A1 (ANXA1).